Reading from the N-terminus, the 156-residue chain is MGPKLLESRLCLLLLLRLVLMLASCLGQTPSRWFAIQHINNNTNLRCNVEMLRINRFRRTCKGLNTFLHTSFANAVGVCGNPSGLCSDNISRNCHNSSSRVHITVCNITSRRRIPYTQCRYQPRRSVEYYTVACNPRTSLDSPMYPVVPVHLDGTF.

The signal sequence occupies residues 1–25 (MGPKLLESRLCLLLLLRLVLMLASC). The active-site Proton acceptor is the His38. An N-linked (GlcNAc...) asparagine glycan is attached at Asn41. Disulfide bonds link Cys47/Cys106, Cys61/Cys119, Cys79/Cys134, and Cys86/Cys94. 62–66 (KGLNT) contributes to the substrate binding site. N-linked (GlcNAc...) asparagine glycans are attached at residues Asn89, Asn96, and Asn107. The active-site Proton donor is His151.

This sequence belongs to the pancreatic ribonuclease family.

The protein is Eosinophil cationic-type ribonuclease 3 (Ear3) of Mus musculus (Mouse).